The chain runs to 237 residues: Flagellar L-ring protein (237 aa).

An N-terminal signal peptide occupies residues 1-16; that stretch reads MIKRSAVVLMAVILTG. Residue cysteine 17 is the site of N-palmitoyl cysteine attachment. Cysteine 17 carries the S-diacylglycerol cysteine lipid modification. The disordered stretch occupies residues 122–143; the sequence is PPDSSGDMSTDSNSSSDGKGSV. Over residues 124–140 the composition is skewed to low complexity; the sequence is DSSGDMSTDSNSSSDGK.

Belongs to the FlgH family. As to quaternary structure, the basal body constitutes a major portion of the flagellar organelle and consists of four rings (L,P,S, and M) mounted on a central rod.

The protein localises to the cell outer membrane. It localises to the bacterial flagellum basal body. Its function is as follows. Assembles around the rod to form the L-ring and probably protects the motor/basal body from shearing forces during rotation. The chain is Flagellar L-ring protein from Allorhizobium ampelinum (strain ATCC BAA-846 / DSM 112012 / S4) (Agrobacterium vitis (strain S4)).